The following is a 290-amino-acid chain: 4-hydroxybenzoate octaprenyltransferase (290 aa).

The next 6 membrane-spanning stretches (helical) occupy residues 33–53, 99–119, 141–161, 213–233, 234–254, and 268–288; these read LWALWVASPGVPPLWILAVFV, LFVILVLLSFLLVLTLNVKTI, LPQVVLGAAFGWSIPMAFCAV, LIIGLLQIAVLALLGTVGWLN, GLGAFYYAGLAGAGALFIWQQ, and AFLNNNYVGLLVFIGLALSYL.

Belongs to the UbiA prenyltransferase family. The cofactor is Mg(2+).

The protein resides in the cell inner membrane. It carries out the reaction all-trans-octaprenyl diphosphate + 4-hydroxybenzoate = 4-hydroxy-3-(all-trans-octaprenyl)benzoate + diphosphate. Its pathway is cofactor biosynthesis; ubiquinone biosynthesis. Catalyzes the prenylation of para-hydroxybenzoate (PHB) with an all-trans polyprenyl group. Mediates the second step in the final reaction sequence of ubiquinone-8 (UQ-8) biosynthesis, which is the condensation of the polyisoprenoid side chain with PHB, generating the first membrane-bound Q intermediate 3-octaprenyl-4-hydroxybenzoate. The protein is 4-hydroxybenzoate octaprenyltransferase of Cronobacter sakazakii (strain ATCC BAA-894) (Enterobacter sakazakii).